The sequence spans 38 residues: Large ribosomal subunit protein bL36 (38 aa).

This sequence belongs to the bacterial ribosomal protein bL36 family.

This chain is Large ribosomal subunit protein bL36, found in Karelsulcia muelleri (strain GWSS) (Sulcia muelleri).